Reading from the N-terminus, the 556-residue chain is Genetic interactor of prohibitins 3, mitochondrial (556 aa).

A mitochondrion-targeting transit peptide spans 1-21 (MLNLCHALRGVRQFSCSVIVK). The CP-type G domain occupies 113 to 305 (ESTLNDILNY…LFDLPGYSTS (193 aa)).

This sequence belongs to the TRAFAC class YlqF/YawG GTPase family. GEP3 subfamily.

The protein localises to the mitochondrion. Functionally, interacts genetically with prohibitins and thus may be involved in the mitochondrial lipid metabolism. This Saccharomyces cerevisiae (strain YJM789) (Baker's yeast) protein is Genetic interactor of prohibitins 3, mitochondrial (GEP3).